The sequence spans 677 residues: DNA-directed RNA polymerase subunit beta' (677 aa).

Cys-69, Cys-71, Cys-87, and Cys-90 together coordinate Zn(2+). Positions 489, 491, and 493 each coordinate Mg(2+).

Belongs to the RNA polymerase beta' chain family. RpoC1 subfamily. In plastids the minimal PEP RNA polymerase catalytic core is composed of four subunits: alpha, beta, beta', and beta''. When a (nuclear-encoded) sigma factor is associated with the core the holoenzyme is formed, which can initiate transcription. Mg(2+) is required as a cofactor. Requires Zn(2+) as cofactor.

It localises to the plastid. It is found in the chloroplast. It catalyses the reaction RNA(n) + a ribonucleoside 5'-triphosphate = RNA(n+1) + diphosphate. DNA-dependent RNA polymerase catalyzes the transcription of DNA into RNA using the four ribonucleoside triphosphates as substrates. The protein is DNA-directed RNA polymerase subunit beta' of Daucus carota (Wild carrot).